The chain runs to 134 residues: UPF0412 protein YaaI (134 aa).

Residues 1-23 (MRSVLTISVGLLFGLALSSVAHA) form the signal peptide.

The protein belongs to the UPF0412 family.

This Salmonella typhimurium (strain LT2 / SGSC1412 / ATCC 700720) protein is UPF0412 protein YaaI.